Consider the following 933-residue polypeptide: Dual 3',5'-cyclic-AMP and -GMP phosphodiesterase 11A (933 aa).

The interval 42-125 (HSQGQGALGP…ASQKELRKSF (84 aa)) is disordered. Phosphoserine occurs at positions 162, 163, and 239. GAF domains lie at 217–370 (DLTS…GIAI) and 402–558 (DLEK…GLGI). Position 424 (Ser-424) interacts with 3',5'-cyclic GMP. One can recognise a PDEase domain in the interval 588 to 912 (SKAEVDKFKA…SKWEELHQKR (325 aa)). His-664 (proton donor) is an active-site residue. His-668, His-704, Asp-705, and Asp-816 together coordinate a divalent metal cation.

Belongs to the cyclic nucleotide phosphodiesterase family. The cofactor is a divalent metal cation. As to expression, isoform 1 is present in prostate, pituitary, heart and liver. It is however not present in testis nor in penis, suggesting that weak inhibition by Tadalafil (Cialis) is not relevant (at protein level). Isoform 2 may be expressed in testis. Isoform 4 is expressed in adrenal cortex.

The protein resides in the cytoplasm. It localises to the cytosol. The catalysed reaction is 3',5'-cyclic GMP + H2O = GMP + H(+). The enzyme catalyses 3',5'-cyclic AMP + H2O = AMP + H(+). Inhibited by 3-isobutyl-1-methylxanthine (IBMX), zaprinast and dipyridamole. cGMP acts as an allosteric activator. Weakly inhibited by Sildenafil (Viagra) and Tadalafil (Cialis); however, the fact that the protein is probably absent from testis, suggests that it is not biologically relevant and is not related with erectile dysfunction. Its function is as follows. Plays a role in signal transduction by regulating the intracellular concentration of cyclic nucleotides cAMP and cGMP. Catalyzes the hydrolysis of both cAMP and cGMP to 5'-AMP and 5'-GMP, respectively. The sequence is that of Dual 3',5'-cyclic-AMP and -GMP phosphodiesterase 11A from Homo sapiens (Human).